The sequence spans 560 residues: Serine palmitoyltransferase 2 (560 aa).

The chain crosses the membrane as a helical span at residues 65–85; the sequence is PMLVAVLTYVGYGVLTLFGYL. The residue at position 377 (Lys-377) is an N6-(pyridoxal phosphate)lysine.

The protein belongs to the class-II pyridoxal-phosphate-dependent aminotransferase family. Component of the serine palmitoyltransferase (SPT) complex, which is composed of SPTLC1, SPTLC2 or SPTLC3 and SPTSSA or SPTSSB. The heterodimer consisting of SPTLC1 and SPTLC2/SPTLC3 forms the catalytic core of the enzyme, while SPTSSA or SPTSSB subunits determine substrate specificity. SPT also interacts with ORMDL proteins, especially ORMDL3, which negatively regulate SPT activity in the presence of ceramides. Forms dimers of heterodimers with SPTLC1. Pyridoxal 5'-phosphate is required as a cofactor. Expressed in a variety of tissues. Expressed in brains cortices (at protein level). Expressed in brown and white adipose tissues. Expressed in liver.

Its subcellular location is the endoplasmic reticulum membrane. It carries out the reaction L-serine + hexadecanoyl-CoA + H(+) = 3-oxosphinganine + CO2 + CoA. It catalyses the reaction octadecanoyl-CoA + L-serine + H(+) = 3-oxoeicosasphinganine + CO2 + CoA. The protein operates within lipid metabolism; sphingolipid metabolism. Its activity is regulated as follows. SPT complex catalytic activity is negatively regulated by ORMDL proteins, including ORMDL3, in the presence of ceramides. This mechanism allows to maintain ceramide levels at sufficient concentrations for the production of complex sphingolipids, but which prevents the accumulation of ceramides to levels that trigger apoptosis. Functionally, component of the serine palmitoyltransferase multisubunit enzyme (SPT) that catalyzes the initial and rate-limiting step in sphingolipid biosynthesis by condensing L-serine and activated acyl-CoA (most commonly palmitoyl-CoA) to form long-chain bases. The SPT complex is composed of SPTLC1, SPTLC2 or SPTLC3 and SPTSSA or SPTSSB. Within this complex, the heterodimer consisting of SPTLC1 and SPTLC2/SPTLC3 forms the catalytic core. The composition of the serine palmitoyltransferase (SPT) complex determines the substrate preference. The SPTLC1-SPTLC2-SPTSSA complex shows a strong preference for C16-CoA substrate, while the SPTLC1-SPTLC3-SPTSSA isozyme uses both C14-CoA and C16-CoA as substrates, with a slight preference for C14-CoA. The SPTLC1-SPTLC2-SPTSSB complex shows a strong preference for C18-CoA substrate, while the SPTLC1-SPTLC3-SPTSSB isozyme displays an ability to use a broader range of acyl-CoAs, without apparent preference. Crucial for adipogenesis. The chain is Serine palmitoyltransferase 2 from Mus musculus (Mouse).